A 177-amino-acid chain; its full sequence is Parathyroid hormone-related protein (177 aa).

The signal sequence occupies residues 1–24 (MQRRLVQQWSVAVFLLSYAVPSCG). A propeptide spanning residues 25-34 (RSVEGLSRRL) is cleaved from the precursor. The important for receptor binding stretch occupies residues 57–68 (RFFLHHLIAEIH). Residues 74–177 (ATSEVSPNSK…TSLELDSRRH (104 aa)) are disordered. The segment covering 76 to 90 (SEVSPNSKPSPNTKN) has biased composition (polar residues). Positions 108–129 (TNKVETYKEQPLKTPGKKKKGK) match the Nuclear localization signal motif. Positions 109–118 (NKVETYKEQP) are enriched in basic and acidic residues. Residues 122 to 132 (PGKKKKGKPGK) are compositionally biased toward basic residues.

The protein belongs to the parathyroid hormone family. In terms of assembly, interacts with PTH1R (via N-terminal extracellular domain). In terms of processing, there are 3 principal secretory forms, called PTHrP[1-36], PTHrP[38-94], and osteostatin (PTHrP[107-139]) arising from endoproteolytic cleavage of the initial translation product. Each of these secretory forms is believed to have one or more of its own receptors that mediates the normal paracrine, autocrine and endocrine actions. Ubiquitous. Also expressed in the mammary gland.

The protein resides in the secreted. Its subcellular location is the cytoplasm. It localises to the nucleus. In terms of biological role, neuroendocrine peptide which is a critical regulator of cellular and organ growth, development, migration, differentiation and survival and of epithelial calcium ion transport. Acts by binding to its receptor, PTH1R, activating G protein-coupled receptor signaling. Regulates endochondral bone development and epithelial-mesenchymal interactions during the formation of the mammary glands and teeth. Required for skeletal homeostasis. Promotes mammary mesenchyme differentiation and bud outgrowth by modulating mesenchymal cell responsiveness to BMPs. Up-regulates BMPR1A expression in the mammary mesenchyme and this increases the sensitivity of these cells to BMPs and allows them to respond to BMP4 in a paracrine and/or autocrine fashion. BMP4 signaling in the mesenchyme, in turn, triggers epithelial outgrowth and augments MSX2 expression, which causes the mammary mesenchyme to inhibit hair follicle formation within the nipple sheath. Promotes colon cancer cell migration and invasion in an integrin alpha-6/beta-1-dependent manner through activation of Rac1. Potent inhibitor of osteoclastic bone resorption. This chain is Parathyroid hormone-related protein, found in Homo sapiens (Human).